Here is a 517-residue protein sequence, read N- to C-terminus: Nuclear receptor subfamily 5 group A member 2 (517 aa).

A DNA-binding region (nuclear receptor) is located at residues 43 to 118; sequence DEMCPVCGDK…VGMKLEAVRA (76 aa). Positions 46, 49, 63, 66, 82, 88, 98, and 101 each coordinate Zn(2+). 2 consecutive NR C4-type zinc fingers follow at residues 46–66 and 82–101; these read CPVC…CESC and CIEN…CPYC. The segment at 112–127 is C-terminal extension (CTE); sequence KLEAVRADRMRGGRNK. Residues 128-147 carry the FTZ-F1 box motif; it reads FGPMYKRDRALKQQKKALIR. The tract at residues 182-211 is disordered; that stretch reads GLPLSHHHHHHHHHHHHSSSSAGLPPADFD. Residues 186-199 are compositionally biased toward basic residues; it reads SHHHHHHHHHHHHS. An NR LBD domain is found at 276–515; that stretch reads SFPHLVVELL…NLLIEMLHAK (240 aa). A phospholipid derivative-binding positions include 397 to 400, Y492, and K496; that span reads GATL. Residues 504-515 are AF-2; sequence CNNLLIEMLHAK.

This sequence belongs to the nuclear hormone receptor family. NR5 subfamily. Monomer; Binds DNA as a monomer.

The protein resides in the nucleus. It localises to the chromosome. Orphan nuclear receptor that binds DNA as a monomer to the 5'-TCAAGGCCA-3' sequence and controls expression of target genes: regulates key biological processes, such as cholesterol and bile acid synthesis pathways, as well as cartilage, liver and pancreas morphogenesis. Ligand-binding causes conformational change which causes recruitment of coactivators, promoting target gene activation. The specific ligand is unknown, but specific phospholipids, such as phosphatidylethanolamine, phosphatidylserine, dilauroyl phosphatidylcholine and diundecanoyl phosphatidylcholine can act as ligand in vitro. Acts as a pioneer transcription factor, which unwraps target DNA from histones and elicits local opening of closed chromatin. Involved in the formation of connective tissue in lower jaw. In terms of biological role, lacks transcription factor activity; unable to activate expression of target genes. This Danio rerio (Zebrafish) protein is Nuclear receptor subfamily 5 group A member 2.